Here is a 474-residue protein sequence, read N- to C-terminus: Cysteine--tRNA ligase (474 aa).

A Zn(2+)-binding site is contributed by cysteine 29. A 'HIGH' region motif is present at residues isoleucine 31–histidine 41. Cysteine 215, histidine 240, and glutamate 244 together coordinate Zn(2+). The 'KMSKS' region motif lies at lysine 273 to serine 277. ATP is bound at residue lysine 276.

It belongs to the class-I aminoacyl-tRNA synthetase family. Zn(2+) is required as a cofactor.

Its subcellular location is the cytoplasm. It carries out the reaction tRNA(Cys) + L-cysteine + ATP = L-cysteinyl-tRNA(Cys) + AMP + diphosphate. The chain is Cysteine--tRNA ligase from Pyrobaculum aerophilum (strain ATCC 51768 / DSM 7523 / JCM 9630 / CIP 104966 / NBRC 100827 / IM2).